Here is a 121-residue protein sequence, read N- to C-terminus: MAFDKDAIIASLKEASILDLADLVKAIEDEFGVSAAAPVAAAGAAGDDAAAKDSFDVELTEPGQAKIGVIKAVRDATGLGLKESKDLVDGAPSVIKKDLNESDANDLKSKLEAAGATVALK.

The protein belongs to the bacterial ribosomal protein bL12 family. In terms of assembly, homodimer. Part of the ribosomal stalk of the 50S ribosomal subunit. Forms a multimeric L10(L12)X complex, where L10 forms an elongated spine to which 2 to 4 L12 dimers bind in a sequential fashion. Binds GTP-bound translation factors.

Functionally, forms part of the ribosomal stalk which helps the ribosome interact with GTP-bound translation factors. Is thus essential for accurate translation. The sequence is that of Large ribosomal subunit protein bL12 from Oenococcus oeni (strain ATCC BAA-331 / PSU-1).